The chain runs to 203 residues: Glycerol-3-phosphate acyltransferase (203 aa).

Transmembrane regions (helical) follow at residues 6–26, 82–102, 118–138, and 141–161; these read LTLLMIVSAYLAGSISSAVLV, AISLGLIAIAACLGHIYPIFF, APIGDDLAICLMASWVVLLLI, and YSSLAAIITALLAPLYTWWLD.

It belongs to the PlsY family. In terms of assembly, probably interacts with PlsX.

It localises to the cell inner membrane. The catalysed reaction is an acyl phosphate + sn-glycerol 3-phosphate = a 1-acyl-sn-glycero-3-phosphate + phosphate. The protein operates within lipid metabolism; phospholipid metabolism. In terms of biological role, catalyzes the transfer of an acyl group from acyl-phosphate (acyl-PO(4)) to glycerol-3-phosphate (G3P) to form lysophosphatidic acid (LPA). This enzyme utilizes acyl-phosphate as fatty acyl donor, but not acyl-CoA or acyl-ACP. The protein is Glycerol-3-phosphate acyltransferase of Shewanella putrefaciens (strain CN-32 / ATCC BAA-453).